A 531-amino-acid polypeptide reads, in one-letter code: MTISRRDLFKAGLAAGAALSVPSLLRAQTAVAADKTVRMALENLSVFDPVATTAGISQTHALAIYDTLFSADSQSQPHPQMVGNWGVSDDKKTYTFELRDGLGWHDGTPVTAADCVASIRRWAQVGSGGQILMSRASDISKKDDRTFVISLKEPLGALPSILAFEGPFIMREKDAGLPPTEQVTANIGSGPFKFNHDLAKPGASFTYDRNEKYVPRKEPPDGMAGGKTVYVDRVVWDIGVLADPQTSVAALQTGEIDFLYRPPIDLLPLIESDPNLKLEALNRAGVDMTLRMNCLQAPFNSVKARQALLHLVDQEAVLRAAYGNPQYFKPVTSMFGNTAAVTNDENTGWFKPGGDPEKAKQLFKEAGYAGEKIVILQATDWAEQSNASQVVAAKLREIGVNAELAPSDWGGLVSRRSKRDSVDNGGWSIFITDQSEATRANVFTDISLAMNGEKAWYGWPKNDEYEALRAKWLTLETLDERKALAREMQKLWWDYVPEVPLGQNIVPSAYSKTLTGLIPATLPLMWNMQKA.

The segment at residues 1–32 (MTISRRDLFKAGLAAGAALSVPSLLRAQTAVA) is a signal peptide (tat-type signal).

It belongs to the bacterial solute-binding protein 5 family. In terms of processing, predicted to be exported by the Tat system. The position of the signal peptide cleavage has not been experimentally proven.

The protein resides in the periplasm. Functionally, probably part of the binding-protein-dependent transport system y4tOPQRS for a peptide. This Sinorhizobium fredii (strain NBRC 101917 / NGR234) protein is Probable peptide ABC transporter periplasmic-binding protein y4tO.